An 859-amino-acid polypeptide reads, in one-letter code: Cleavage factor two protein 2 (859 aa).

Residues 560-611 (PDDSDNVNQNSRKRPLKDGAKTTSPVNEEDNKNEEEDGYNMSDPISKRSKHR) form a disordered region. Residues 586–597 (NEEDNKNEEEDG) show a composition bias toward acidic residues.

Component of the cleavage and polyadenylation factor (CPF) complex, which is composed of at least PTI1, SYC1, SSU72, GLC7, MPE1, REF2, PFS2, PTA1, YSH1/BRR5, SWD2, CFT2/YDH1, YTH1, CFT1/YHH1, FIP1 and PAP1. Interacts with the CTD domain of RPB1/RNA polymerase II; the interaction is enhanced upon phosphorylation of the RPB1 CTD domain. Interacts with PCF11.

The protein localises to the nucleus. RNA-binding component of the cleavage and polyadenylation factor (CPF) complex, which plays a key role in polyadenylation-dependent pre-mRNA 3'-end formation and cooperates with cleavage factors including the CFIA complex and NAB4/CFIB. May be involved in poly(A)-site recognition. May be involved in the association of the CPF, CPFIA and RNA polymerase II complexes. The polypeptide is Cleavage factor two protein 2 (CFT2) (Saccharomyces cerevisiae (strain ATCC 204508 / S288c) (Baker's yeast)).